The sequence spans 531 residues: Calcium-dependent protein kinase 21 (531 aa).

Residues 1-10 are compositionally biased toward basic residues; that stretch reads MGCFSSKHRK. A disordered region spans residues 1–62; the sequence is MGCFSSKHRK…STPSSNPVSV (62 aa). Residue Gly-2 is the site of N-myristoyl glycine attachment. Residues 48–60 are compositionally biased toward polar residues; sequence IHQQISTPSSNPV. One can recognise a Protein kinase domain in the interval 80–338; sequence YSLGKELGRG…AAQVLEHPWI (259 aa). ATP contacts are provided by residues 86–94 and Lys-109; that span reads LGRGQFGIT. Asp-204 functions as the Proton acceptor in the catalytic mechanism. Ser-244 carries the post-translational modification Phosphoserine. Positions 343-373 are autoinhibitory domain; it reads APDKPIDSAVLSRMKQFRAMNKLKKLALKVI. EF-hand domains lie at 380-415, 416-451, 452-487, and 488-522; these read EEIK…LGSR, LSET…RYKL, DRDE…YGMG, and DEAS…GSTQ. Residues Asp-393, Asp-395, Ser-397, Thr-399, Glu-404, Asp-429, Asp-431, Asn-433, Thr-435, Glu-440, Asp-465, Asp-467, Ser-469, His-471, Glu-476, Asp-500, Asp-502, Asp-504, Arg-506, and Glu-511 each contribute to the Ca(2+) site.

Belongs to the protein kinase superfamily. Ser/Thr protein kinase family. CDPK subfamily. As to quaternary structure, interacts with SLAC1 and ABI1.

The protein localises to the cell membrane. The enzyme catalyses L-seryl-[protein] + ATP = O-phospho-L-seryl-[protein] + ADP + H(+). The catalysed reaction is L-threonyl-[protein] + ATP = O-phospho-L-threonyl-[protein] + ADP + H(+). Activated by calcium. Autophosphorylation may play an important role in the regulation of the kinase activity. May play a role in signal transduction pathways that involve calcium as a second messenger. Mediates the phosphorylation and activation of the S-type anion efflux channel SLAC1. The sequence is that of Calcium-dependent protein kinase 21 (CPK21) from Arabidopsis thaliana (Mouse-ear cress).